We begin with the raw amino-acid sequence, 303 residues long: Recombination-associated protein RdgC (303 aa).

It belongs to the RdgC family.

It is found in the cytoplasm. The protein localises to the nucleoid. In terms of biological role, may be involved in recombination. The sequence is that of Recombination-associated protein RdgC from Salmonella newport (strain SL254).